Consider the following 136-residue polypeptide: Probable glycine cleavage system H protein 3 (136 aa).

Residues 28–109 (MVTVGITSLG…PYDAWIVKIK (82 aa)) form the Lipoyl-binding domain. N6-lipoyllysine is present on lysine 69.

Belongs to the GcvH family. As to quaternary structure, the glycine cleavage system is composed of four proteins: P, T, L and H. It depends on (R)-lipoate as a cofactor.

Functionally, the glycine cleavage system catalyzes the degradation of glycine. The H protein shuttles the methylamine group of glycine from the P protein to the T protein. The sequence is that of Probable glycine cleavage system H protein 3 from Sulfurisphaera tokodaii (strain DSM 16993 / JCM 10545 / NBRC 100140 / 7) (Sulfolobus tokodaii).